Reading from the N-terminus, the 469-residue chain is A-type ATP synthase subunit B 3 (469 aa).

It belongs to the ATPase alpha/beta chains family. In terms of assembly, has multiple subunits with at least A(3), B(3), C, D, E, F, H, I and proteolipid K(x).

The protein localises to the cell membrane. Component of the A-type ATP synthase that produces ATP from ADP in the presence of a proton gradient across the membrane. The B chain is a regulatory subunit. The protein is A-type ATP synthase subunit B 3 of Methanospirillum hungatei JF-1 (strain ATCC 27890 / DSM 864 / NBRC 100397 / JF-1).